A 185-amino-acid polypeptide reads, in one-letter code: Shikimate kinase (185 aa).

15 to 20 (GAGKST) lines the ATP pocket. Serine 19 is a binding site for Mg(2+). 3 residues coordinate substrate: aspartate 37, arginine 61, and glycine 83. Arginine 121 serves as a coordination point for ATP. Arginine 146 is a substrate binding site.

This sequence belongs to the shikimate kinase family. In terms of assembly, monomer. Mg(2+) serves as cofactor.

The protein localises to the cytoplasm. The enzyme catalyses shikimate + ATP = 3-phosphoshikimate + ADP + H(+). Its pathway is metabolic intermediate biosynthesis; chorismate biosynthesis; chorismate from D-erythrose 4-phosphate and phosphoenolpyruvate: step 5/7. Its function is as follows. Catalyzes the specific phosphorylation of the 3-hydroxyl group of shikimic acid using ATP as a cosubstrate. This chain is Shikimate kinase, found in Blochmanniella floridana.